A 450-amino-acid chain; its full sequence is Calcium-binding and coiled-coil domain-containing protein 2 (450 aa).

The CLIR motif lies at 133–136 (ILVV). The stretch at 135-349 (VVTTQSEVEE…RENNRLLSYM (215 aa)) forms a coiled coil. Positions 203 to 206 (DCWE) match the LIR-like motif. Residues 371-381 (DPGLVFGNPYS) form an interaction with LGALS8 region. Residues 395–450 (KKCPTCKSDFAADVFDHNLALEQHLQTLSLNCPICDKTFPAKEKQIFEDHVFCHTL) form an interaction with MYO6 region. A UBZ1-type zinc finger spans residues 423 to 448 (SLNCPICDKTFPAKEKQIFEDHVFCH). Residues Cys-426, Cys-429, His-444, and His-448 each coordinate Zn(2+).

Belongs to the CALCOCO family. Dimer. Part of a complex consisting of CALCOCO2, TAX1BP1 and MYO6. Interacts with GEMIN4. Interacts with ATG8 family members MAP1LC3A, MAP1LC3B, GABARAP, GABARAPL1 and GABARAPL2. Interacts with ATG8 family member MAP1LC3C. Interacts with LGALS8. Interacts with TOM1; the interaction is indirect and is mediated by MYO6, which acts as a bridge between TOM1 and CALCOCO2. Interacts with AZI2.

It is found in the cytoplasm. Its subcellular location is the perinuclear region. The protein localises to the cytoskeleton. The protein resides in the cytoplasmic vesicle. It localises to the autophagosome membrane. Functionally, xenophagy-specific receptor required for autophagy-mediated intracellular bacteria degradation. Acts as an effector protein of galectin-sensed membrane damage that restricts the proliferation of infecting pathogens upon entry into the cytosol by targeting LGALS8-associated bacteria for autophagy. Initially orchestrates bacteria targeting to autophagosomes and subsequently ensures pathogen degradation by regulating pathogen-containing autophagosome maturation. Bacteria targeting to autophagosomes relies on its interaction with MAP1LC3A, MAP1LC3B and/or GABARAPL2, whereas regulation of pathogen-containing autophagosome maturation requires the interaction with MAP3LC3C. May play a role in ruffle formation and actin cytoskeleton organization and seems to negatively regulate constitutive secretion. The protein is Calcium-binding and coiled-coil domain-containing protein 2 of Bos taurus (Bovine).